A 470-amino-acid polypeptide reads, in one-letter code: Aspartyl aminopeptidase (470 aa).

Histidine 92 contributes to the Zn(2+) binding site. Histidine 166 provides a ligand contact to substrate. Aspartate 263 contacts Zn(2+). Residue glutamate 299 participates in substrate binding. Positions 300 and 343 each coordinate Zn(2+). The substrate site is built by aspartate 343, histidine 346, lysine 371, and tyrosine 378. Histidine 437 contacts Zn(2+).

This sequence belongs to the peptidase M18 family. In terms of assembly, tetrahedron-shaped homododecamer built from six homodimers. Zn(2+) serves as cofactor. In terms of tissue distribution, expressed in various cell types and tissues including the pharynx, neurons, body wall muscle, intestine and vulva.

It is found in the cytoplasm. The protein localises to the cytosol. The enzyme catalyses Release of an N-terminal aspartate or glutamate from a peptide, with a preference for aspartate.. Its function is as follows. Aminopeptidase with specificity towards an acidic amino acid at the N-terminus. Plays a role in membrane trafficking and is specifically involved in the recycling and degradation of endocytic cargo. This Caenorhabditis elegans protein is Aspartyl aminopeptidase.